A 254-amino-acid chain; its full sequence is PF03932 family protein CutC (254 aa).

This sequence belongs to the CutC family.

The protein localises to the cytoplasm. The polypeptide is PF03932 family protein CutC (Yersinia enterocolitica serotype O:8 / biotype 1B (strain NCTC 13174 / 8081)).